Here is a 365-residue protein sequence, read N- to C-terminus: Alternative oxidase 2, mitochondrial (365 aa).

Positions Thr32 to Ala46 are enriched in low complexity. A disordered region spans residues Thr32–His52. Residues Glu166, Glu205, and His208 each coordinate Fe cation. Residues Trp220–Leu242 traverse the membrane as a helical segment. Fe cation-binding residues include Glu256, Glu257, Glu312, and His315. Positions Gln345–Leu365 are disordered.

It belongs to the alternative oxidase family. It depends on Fe cation as a cofactor.

Its subcellular location is the mitochondrion inner membrane. Its function is as follows. Catalyzes cyanide-resistant oxygen consumption. May increase respiration when the cytochrome respiratory pathway is restricted, or in response to low temperatures. This Candida albicans (Yeast) protein is Alternative oxidase 2, mitochondrial (AOX2).